A 412-amino-acid chain; its full sequence is Solute carrier family 22 member 18 (412 aa).

10 consecutive transmembrane segments (helical) span residues 16-36, 51-71, 117-137, 148-168, 176-196, 232-252, 264-284, 294-314, 316-336, and 380-400; these read GIIILTYVLAALELTCLFMQF, VSFGYLQTTFGVLQLLGGPVF, LPAALMHTLPAAQMVITDLTA, LGLCFGIGVIFGSLLGGTLST, AFLAFVVTLLGAVLSFTCIPV, FLVKVISGFPSGLFMVMFSII, AGYLMSFFGILQMMIQGLVIG, ALLRSSVLVFAVVGLGMALMS, VFHFCLLLPGLVFSLCALNIV, and GVSILGHVQLMVNLLVLLVLW.

This sequence belongs to the major facilitator (TC 2.A.1) superfamily. Organic cation transporter (TC 2.A.1.19) family.

It localises to the apical cell membrane. Its function is as follows. May act as a transporter of organic cations based on a proton efflux antiport mechanism. May play a role in the transport of chloroquine and quinidine-related compounds in kidney. Plays a role in the regulation of lipid metabolism. This Rattus norvegicus (Rat) protein is Solute carrier family 22 member 18 (Slc67a1).